Consider the following 142-residue polypeptide: MAAMTVQLDIVSAESRIYSGLVAHLQVTGSEGDLGVMPGHAPLLTHIKPGMARIVKQDGSEEVFYLSGGILEVQPFSVSVLADVVLRADEIDEQAAVEAKRRAETALADAGADFNYAAAAIELAQAIAQLRVVETIKKNIAR.

This sequence belongs to the ATPase epsilon chain family. In terms of assembly, F-type ATPases have 2 components, CF(1) - the catalytic core - and CF(0) - the membrane proton channel. CF(1) has five subunits: alpha(3), beta(3), gamma(1), delta(1), epsilon(1). CF(0) has three main subunits: a, b and c.

The protein resides in the cell inner membrane. Functionally, produces ATP from ADP in the presence of a proton gradient across the membrane. In Shewanella sediminis (strain HAW-EB3), this protein is ATP synthase epsilon chain.